A 248-amino-acid polypeptide reads, in one-letter code: MSKLEGKVAVVTGASKGIGAAIAKALAKDGAAVVVNYASSKAGADAVVEAITAAGGKAIAVQADVSQAVQARGLVEAAVQQFGRLDVLVNNSGVYEFAAIEEVTEEHYRRIFDVNVLGVLLATQAASKHLGEGGSIINISSVVTDVLMPTSAVYSGTKGALNAISGVLANELAPRKIRVNVVSPGYVVTEGTHTAGIAGSEMEAGLVAQTPLGRSGQPDDIAGVVAFLASDDARWVTGEVINASGGVR.

S141 contributes to the substrate binding site. The Proton acceptor role is filled by Y154.

The protein belongs to the short-chain dehydrogenases/reductases (SDR) family.

This is an uncharacterized protein from Methylorubrum extorquens (strain ATCC 14718 / DSM 1338 / JCM 2805 / NCIMB 9133 / AM1) (Methylobacterium extorquens).